Here is a 751-residue protein sequence, read N- to C-terminus: Myb-related protein A (751 aa).

Residues 1–22 (MAKRSRSEDEDDDLQYADHDYE) form a disordered region. HTH myb-type domains are found at residues 30–81 (KKLW…QKVL), 82–137 (NPEL…NPEV), and 138–188 (KKSS…RRKV). DNA-binding regions (H-T-H motif) lie at residues 58–81 (WTLI…QKVL), 110–133 (WSLI…HNHL), and 161–184 (WAEI…NSTM). K199 participates in a covalent cross-link: Glycyl lysine isopeptide (Lys-Gly) (interchain with G-Cter in SUMO2). Residues 230 to 294 (IPGYQYVSPD…RLPPQPGSFS (65 aa)) are transcriptional activation domain. Residues 297-552 (SGSFLMDDSM…IRRSILGTTP (256 aa)) form a negative regulatory domain region. K393 is modified (N6-acetyllysine). Glycyl lysine isopeptide (Lys-Gly) (interchain with G-Cter in SUMO2) cross-links involve residues K591 and K601.

In terms of assembly, component of the DREAM complex (also named LINC complex) at least composed of E2F4, E2F5, LIN9, LIN37, LIN52, LIN54, MYBL1, MYBL2, RBL1, RBL2, RBBP4, TFDP1 and TFDP2. The complex exists in quiescent cells where it represses cell cycle-dependent genes. It dissociates in S phase when LIN9, LIN37, LIN52 and LIN54 form a subcomplex that binds to MYBL2. In terms of tissue distribution, predominantly in the testis. Very low levels in the ovaries, spleen and brain.

It localises to the nucleus. Transcription factor that specifically recognizes the sequence 5'-YAAC[GT]G-3'. Acts as a master regulator of male meiosis by promoting expression of piRNAs: activates expression of both piRNA precursor RNAs and expression of protein-coding genes involved in piRNA metabolism, such as PIWIL1. The piRNA metabolic process mediates the repression of transposable elements during meiosis by forming complexes composed of piRNAs and Piwi proteins and governs the methylation and subsequent repression of transposons, which is essential for the germline integrity. Transcriptional activator of SOX30. The polypeptide is Myb-related protein A (Mybl1) (Mus musculus (Mouse)).